A 483-amino-acid chain; its full sequence is Glycogen synthase kinase-3 alpha (483 aa).

A compositionally biased stretch (gly residues) spans 1–15 (MSGGGPSGGGPGGSG). A disordered region spans residues 1-96 (MSGGGPSGGG…PPPGVKLGRD (96 aa)). Position 2 is an N-acetylserine (Ser2). Residue Ser2 is modified to Phosphoserine. The residue at position 21 (Ser21) is a Phosphoserine; by PKB/AKT1. Positions 25–82 (PGGGGGGGGGGPGGSASGPGGTGGGKASVGAMGGGVGASSSGGGPSGSGGGGSGGPGA) are enriched in gly residues. A phosphoserine mark is found at Ser72, Ser77, and Ser97. The 285-residue stretch at 119–403 (YTDIKVIGNG…PLEACAHSFF (285 aa)) folds into the Protein kinase domain. ATP is bound by residues 125-133 (IGNGSFGVV) and Lys148. The active-site Proton acceptor is the Asp244. Tyr279 is subject to Phosphotyrosine. The tract at residues 443-483 (PHLRSPSGPATLTSSSQALTETQTGQDWQAPDATPTLTNSS) is disordered. The segment covering 450 to 469 (GPATLTSSSQALTETQTGQD) has biased composition (polar residues).

This sequence belongs to the protein kinase superfamily. CMGC Ser/Thr protein kinase family. GSK-3 subfamily. In terms of assembly, monomer. Interacts with ARRB2, AXIN1 and CTNNB1/beta-catenin. Interacts with CTNND2. Interacts with LMBR1L. Interacts with DDX3X. Interacts with TNFRSF10B. Phosphorylated by AKT1 at Ser-21: upon insulin-mediated signaling, the activated PKB/AKT1 protein kinase phosphorylates and deactivates GSK3A, resulting in the dephosphorylation and activation of GYS1. Activated by phosphorylation at Tyr-279.

It carries out the reaction L-seryl-[tau protein] + ATP = O-phospho-L-seryl-[tau protein] + ADP + H(+). The catalysed reaction is L-threonyl-[tau protein] + ATP = O-phospho-L-threonyl-[tau protein] + ADP + H(+). It catalyses the reaction L-seryl-[protein] + ATP = O-phospho-L-seryl-[protein] + ADP + H(+). The enzyme catalyses L-threonyl-[protein] + ATP = O-phospho-L-threonyl-[protein] + ADP + H(+). Its activity is regulated as follows. Activated by phosphorylation at Tyr-279. In response to insulin, inhibited by phosphorylation at Ser-21 by PKB/AKT1; phosphorylation at this site causes a conformational change, preventing access of substrates to the active site. Inhibited by lithium. Functionally, constitutively active protein kinase that acts as a negative regulator in the hormonal control of glucose homeostasis, Wnt signaling and regulation of transcription factors and microtubules, by phosphorylating and inactivating glycogen synthase (GYS1 or GYS2), CTNNB1/beta-catenin, APC and AXIN1. Requires primed phosphorylation of the majority of its substrates. Contributes to insulin regulation of glycogen synthesis by phosphorylating and inhibiting GYS1 activity and hence glycogen synthesis. Regulates glycogen metabolism in liver, but not in muscle. May also mediate the development of insulin resistance by regulating activation of transcription factors. In Wnt signaling, regulates the level and transcriptional activity of nuclear CTNNB1/beta-catenin. Facilitates amyloid precursor protein (APP) processing and the generation of APP-derived amyloid plaques found in Alzheimer disease. May be involved in the regulation of replication in pancreatic beta-cells. Is necessary for the establishment of neuronal polarity and axon outgrowth. Through phosphorylation of the anti-apoptotic protein MCL1, may control cell apoptosis in response to growth factors deprivation. Acts as a regulator of autophagy by mediating phosphorylation of KAT5/TIP60 under starvation conditions, activating KAT5/TIP60 acetyltransferase activity and promoting acetylation of key autophagy regulators, such as ULK1 and RUBCNL/Pacer. Negatively regulates extrinsic apoptotic signaling pathway via death domain receptors. Promotes the formation of an anti-apoptotic complex, made of DDX3X, BRIC2 and GSK3B, at death receptors, including TNFRSF10B. The anti-apoptotic function is most effective with weak apoptotic signals and can be overcome by stronger stimulation. The protein is Glycogen synthase kinase-3 alpha (Gsk3a) of Rattus norvegicus (Rat).